A 357-amino-acid chain; its full sequence is UDP-N-acetylglucosamine--N-acetylmuramyl-(pentapeptide) pyrophosphoryl-undecaprenol N-acetylglucosamine transferase (357 aa).

UDP-N-acetyl-alpha-D-glucosamine is bound by residues 15–17 (TGG), Asn-124, Arg-165, Ser-194, and Gln-288.

Belongs to the glycosyltransferase 28 family. MurG subfamily.

It is found in the cell inner membrane. The enzyme catalyses di-trans,octa-cis-undecaprenyl diphospho-N-acetyl-alpha-D-muramoyl-L-alanyl-D-glutamyl-meso-2,6-diaminopimeloyl-D-alanyl-D-alanine + UDP-N-acetyl-alpha-D-glucosamine = di-trans,octa-cis-undecaprenyl diphospho-[N-acetyl-alpha-D-glucosaminyl-(1-&gt;4)]-N-acetyl-alpha-D-muramoyl-L-alanyl-D-glutamyl-meso-2,6-diaminopimeloyl-D-alanyl-D-alanine + UDP + H(+). Its pathway is cell wall biogenesis; peptidoglycan biosynthesis. Its function is as follows. Cell wall formation. Catalyzes the transfer of a GlcNAc subunit on undecaprenyl-pyrophosphoryl-MurNAc-pentapeptide (lipid intermediate I) to form undecaprenyl-pyrophosphoryl-MurNAc-(pentapeptide)GlcNAc (lipid intermediate II). In Trichormus variabilis (strain ATCC 29413 / PCC 7937) (Anabaena variabilis), this protein is UDP-N-acetylglucosamine--N-acetylmuramyl-(pentapeptide) pyrophosphoryl-undecaprenol N-acetylglucosamine transferase.